The sequence spans 215 residues: Urease accessory protein UreG (215 aa).

A GTP-binding site is contributed by 24–31; the sequence is GPVGSGKT.

Belongs to the SIMIBI class G3E GTPase family. UreG subfamily. In terms of assembly, homodimer. UreD, UreF and UreG form a complex that acts as a GTP-hydrolysis-dependent molecular chaperone, activating the urease apoprotein by helping to assemble the nickel containing metallocenter of UreC. The UreE protein probably delivers the nickel.

The protein localises to the cytoplasm. Its function is as follows. Facilitates the functional incorporation of the urease nickel metallocenter. This process requires GTP hydrolysis, probably effectuated by UreG. The polypeptide is Urease accessory protein UreG (Burkholderia ambifaria (strain MC40-6)).